Consider the following 98-residue polypeptide: NADH-ubiquinone oxidoreductase chain 4L (98 aa).

The next 3 membrane-spanning stretches (helical) occupy residues proline 2–phenylalanine 22, serine 29–methionine 49, and isoleucine 61–valine 81.

Belongs to the complex I subunit 4L family. Core subunit of respiratory chain NADH dehydrogenase (Complex I) which is composed of 45 different subunits.

The protein localises to the mitochondrion inner membrane. The enzyme catalyses a ubiquinone + NADH + 5 H(+)(in) = a ubiquinol + NAD(+) + 4 H(+)(out). Functionally, core subunit of the mitochondrial membrane respiratory chain NADH dehydrogenase (Complex I) which catalyzes electron transfer from NADH through the respiratory chain, using ubiquinone as an electron acceptor. Part of the enzyme membrane arm which is embedded in the lipid bilayer and involved in proton translocation. This chain is NADH-ubiquinone oxidoreductase chain 4L (MT-ND4L), found in Lepilemur mitsinjoensis (Mitsinjo sportive lemur).